A 313-amino-acid polypeptide reads, in one-letter code: uncharacterized protein (313 aa).

Disordered stretches follow at residues 24–53 and 190–291; these read EEGE…PTPN and TALS…PCAR. Residues 211–229 show a composition bias toward polar residues; that stretch reads TQNYVLKLQLSSPNSQPMS. Residues 239-260 are compositionally biased toward low complexity; the sequence is SCSSSNCSSSSSSSACSSVSIS. Positions 261 to 284 are enriched in polar residues; sequence DPNNITAYETNNVNPQFPSNQPLD.

This is an uncharacterized protein from Saccharomyces cerevisiae (strain ATCC 204508 / S288c) (Baker's yeast).